Here is a 79-residue protein sequence, read N- to C-terminus: Small ribosomal subunit protein bS18 (79 aa).

The protein belongs to the bacterial ribosomal protein bS18 family. In terms of assembly, part of the 30S ribosomal subunit. Forms a tight heterodimer with protein bS6.

Binds as a heterodimer with protein bS6 to the central domain of the 16S rRNA, where it helps stabilize the platform of the 30S subunit. The polypeptide is Small ribosomal subunit protein bS18 (Bacillus velezensis (strain DSM 23117 / BGSC 10A6 / LMG 26770 / FZB42) (Bacillus amyloliquefaciens subsp. plantarum)).